Consider the following 90-residue polypeptide: Accessory gland-specific peptide 26Ab (90 aa).

Positions 1-21 (MNYFAVLCIFSCICFWQFSDA) are cleaved as a signal peptide.

Main cells of the accessory glands of males.

The protein localises to the secreted. The protein resides in the extracellular space. Functionally, this protein is transferred from male to female during mating and may affect egglaying and behavior after mating. The chain is Accessory gland-specific peptide 26Ab (Acp26Ab) from Drosophila simulans (Fruit fly).